The sequence spans 411 residues: Arginine deiminase (411 aa).

Residue Cys-401 is the Amidino-cysteine intermediate of the active site.

This sequence belongs to the arginine deiminase family.

The protein resides in the cytoplasm. The enzyme catalyses L-arginine + H2O = L-citrulline + NH4(+). It functions in the pathway amino-acid degradation; L-arginine degradation via ADI pathway; carbamoyl phosphate from L-arginine: step 1/2. This is Arginine deiminase from Streptococcus equi subsp. zooepidemicus (strain MGCS10565).